An 86-amino-acid polypeptide reads, in one-letter code: Small ribosomal subunit protein uS15 (86 aa).

This sequence belongs to the universal ribosomal protein uS15 family. As to quaternary structure, part of the 30S ribosomal subunit. Forms a bridge to the 50S subunit in the 70S ribosome, contacting the 23S rRNA.

Its function is as follows. One of the primary rRNA binding proteins, it binds directly to 16S rRNA where it helps nucleate assembly of the platform of the 30S subunit by binding and bridging several RNA helices of the 16S rRNA. Functionally, forms an intersubunit bridge (bridge B4) with the 23S rRNA of the 50S subunit in the ribosome. The protein is Small ribosomal subunit protein uS15 of Ruthia magnifica subsp. Calyptogena magnifica.